A 31-amino-acid polypeptide reads, in one-letter code: Cytochrome b6-f complex subunit 6 (31 aa).

Residues 4 to 26 (ITSYFGFLLTALTITSALFIGLS) form a helical membrane-spanning segment.

The protein belongs to the PetL family. The 4 large subunits of the cytochrome b6-f complex are cytochrome b6, subunit IV (17 kDa polypeptide, PetD), cytochrome f and the Rieske protein, while the 4 small subunits are PetG, PetL, PetM and PetN. The complex functions as a dimer.

It localises to the plastid. The protein localises to the chloroplast thylakoid membrane. Component of the cytochrome b6-f complex, which mediates electron transfer between photosystem II (PSII) and photosystem I (PSI), cyclic electron flow around PSI, and state transitions. PetL is important for photoautotrophic growth as well as for electron transfer efficiency and stability of the cytochrome b6-f complex. In Lactuca sativa (Garden lettuce), this protein is Cytochrome b6-f complex subunit 6.